Reading from the N-terminus, the 227-residue chain is uncharacterized protein (227 aa).

Positions 5 to 220 (TSSPYAFYAF…IAWDEFETGL (216 aa)) constitute an AMMECR1 domain.

This is an uncharacterized protein from Kluyveromyces lactis (strain ATCC 8585 / CBS 2359 / DSM 70799 / NBRC 1267 / NRRL Y-1140 / WM37) (Yeast).